A 25-amino-acid chain; its full sequence is Omega-conotoxin CVIB (25 aa).

Cystine bridges form between C1-C16, C8-C20, and C15-C25. C25 bears the Cysteine amide mark.

The protein belongs to the conotoxin O1 superfamily. As to expression, expressed by the venom duct.

It is found in the secreted. Its function is as follows. Omega-conotoxins act at presynaptic membranes, they bind and block voltage-gated calcium channels (Cav). This toxin blocks N-, P- and Q-type calcium channels. It shows high activities on Cav2.1/CACNA1A (IC(50)=11 nM) and Cav2.2/CACNA1B (IC(50)=7.7 nM). In addition, it shows a higher potency when Cav2.2/CACNA1B is only expressed with the ancillary subunit CACNB3 (IC(50)=1.6 nM) than on Cav2.2/CACNA1B expressed with the ancillary subunits CACNA2D1 and CACNB3 (IC(50)=12 nM). Both the Cav2.2/CACNA1B block by this toxin and the recovery are voltage-independent. It is noteworthy that ancillary subunits beta do not modulate recovery from this toxin block, since Cav2.2/CACNA1B expressed with either the ancillary subunit CACNB2a (isoform 2a) or with CACNB3 exhibits moderate recovery. In Conus catus (Cat cone), this protein is Omega-conotoxin CVIB.